Consider the following 166-residue polypeptide: Regulatory protein RecX (166 aa).

Belongs to the RecX family.

Its subcellular location is the cytoplasm. In terms of biological role, modulates RecA activity. The chain is Regulatory protein RecX from Shigella boydii serotype 4 (strain Sb227).